The sequence spans 409 residues: Type II methyltransferase M.BsuFI (409 aa).

Positions 101 to 402 constitute an SAM-dependent MTase C5-type domain; the sequence is LTFIDLFAGI…GAMKERLLLA (302 aa). Residue Cys-170 is part of the active site.

This sequence belongs to the class I-like SAM-binding methyltransferase superfamily. C5-methyltransferase family.

The enzyme catalyses a 2'-deoxycytidine in DNA + S-adenosyl-L-methionine = a 5-methyl-2'-deoxycytidine in DNA + S-adenosyl-L-homocysteine + H(+). Its function is as follows. A methylase, recognizes the double-stranded sequence 5'-CCGG-3', methylates C-1 on both strands, and protects the DNA from cleavage by the BsuFI endonuclease. This Bacillus subtilis protein is Type II methyltransferase M.BsuFI (hsdFM).